Here is a 379-residue protein sequence, read N- to C-terminus: Succinyl-diaminopimelate desuccinylase (379 aa).

Histidine 70 provides a ligand contact to Zn(2+). Aspartate 72 is a catalytic residue. Aspartate 103 lines the Zn(2+) pocket. Catalysis depends on glutamate 137, which acts as the Proton acceptor. Residues glutamate 138, glutamate 166, and histidine 352 each coordinate Zn(2+).

Belongs to the peptidase M20A family. DapE subfamily. In terms of assembly, homodimer. Zn(2+) serves as cofactor. Co(2+) is required as a cofactor.

It catalyses the reaction N-succinyl-(2S,6S)-2,6-diaminopimelate + H2O = (2S,6S)-2,6-diaminopimelate + succinate. Its pathway is amino-acid biosynthesis; L-lysine biosynthesis via DAP pathway; LL-2,6-diaminopimelate from (S)-tetrahydrodipicolinate (succinylase route): step 3/3. Catalyzes the hydrolysis of N-succinyl-L,L-diaminopimelic acid (SDAP), forming succinate and LL-2,6-diaminopimelate (DAP), an intermediate involved in the bacterial biosynthesis of lysine and meso-diaminopimelic acid, an essential component of bacterial cell walls. This Shewanella putrefaciens (strain CN-32 / ATCC BAA-453) protein is Succinyl-diaminopimelate desuccinylase.